We begin with the raw amino-acid sequence, 1158 residues long: ATP-dependent helicase/deoxyribonuclease subunit B (1158 aa).

The UvrD-like helicase ATP-binding domain maps to 1 to 275 (MTLHAYLGRA…QYFNQLYRFN (275 aa)). 8–15 (GRAGTGKS) is an ATP binding site. A UvrD-like helicase C-terminal domain is found at 269–583 (NQLYRFNNQD…SIGTMDLAKV (315 aa)). 4 residues coordinate [4Fe-4S] cluster: Cys-784, Cys-1112, Cys-1115, and Cys-1121.

It belongs to the helicase family. AddB/RexB type 1 subfamily. Heterodimer of AddA and AddB. Mg(2+) is required as a cofactor. [4Fe-4S] cluster serves as cofactor.

The heterodimer acts as both an ATP-dependent DNA helicase and an ATP-dependent, dual-direction single-stranded exonuclease. Recognizes the chi site generating a DNA molecule suitable for the initiation of homologous recombination. The AddB subunit has 5' -&gt; 3' nuclease activity but not helicase activity. The polypeptide is ATP-dependent helicase/deoxyribonuclease subunit B (Staphylococcus aureus (strain MRSA252)).